Consider the following 106-residue polypeptide: P4 prophage-derived uncharacterized protein t2655 (106 aa).

The polypeptide is P4 prophage-derived uncharacterized protein t2655 (Salmonella typhi).